A 60-amino-acid chain; its full sequence is Large ribosomal subunit protein bL32 (60 aa).

The span at 1–20 (MAVQKSRKSRSRRDMRRSHH) shows a compositional bias: basic residues. Residues 1–60 (MAVQKSRKSRSRRDMRRSHHHMEVAELSIDATTGEKHRRHHMTKDGFYRGRQLFKASQED) are disordered.

Belongs to the bacterial ribosomal protein bL32 family.

The polypeptide is Large ribosomal subunit protein bL32 (Psychrobacter sp. (strain PRwf-1)).